We begin with the raw amino-acid sequence, 120 residues long: Large ribosomal subunit protein bL20 (120 aa).

The protein belongs to the bacterial ribosomal protein bL20 family.

In terms of biological role, binds directly to 23S ribosomal RNA and is necessary for the in vitro assembly process of the 50S ribosomal subunit. It is not involved in the protein synthesizing functions of that subunit. This Paracidovorax citrulli (strain AAC00-1) (Acidovorax citrulli) protein is Large ribosomal subunit protein bL20.